The chain runs to 331 residues: Ornithine carbamoyltransferase (331 aa).

Residues 55-58 (STRT), Q82, R106, and 133-136 (HPTQ) each bind carbamoyl phosphate. L-ornithine-binding positions include N166, D230, and 234 to 235 (SM). Carbamoyl phosphate contacts are provided by residues 272–273 (CL) and R317.

Belongs to the aspartate/ornithine carbamoyltransferase superfamily. OTCase family.

The protein localises to the cytoplasm. The catalysed reaction is carbamoyl phosphate + L-ornithine = L-citrulline + phosphate + H(+). The protein operates within amino-acid biosynthesis; L-arginine biosynthesis; L-arginine from L-ornithine and carbamoyl phosphate: step 1/3. In terms of biological role, reversibly catalyzes the transfer of the carbamoyl group from carbamoyl phosphate (CP) to the N(epsilon) atom of ornithine (ORN) to produce L-citrulline. The polypeptide is Ornithine carbamoyltransferase (argF) (Neisseria gonorrhoeae).